The sequence spans 658 residues: UvrABC system protein B (658 aa).

Residues 26-414 (AGLKKGLKHQ…PDVIEQIIRP (389 aa)) enclose the Helicase ATP-binding domain. 39–46 (GATGTGKT) lines the ATP pocket. Residues 92–115 (YYDYYQPEAYVPQSDTYIEKDASI) carry the Beta-hairpin motif. Residues 430 to 592 (QIDDLMDEIN…ITPKTIRKEI (163 aa)) enclose the Helicase C-terminal domain. Residues 622–658 (DIFIEGMEHEMKEAAKALDFERAAELRDALLEIKAEG) enclose the UVR domain.

It belongs to the UvrB family. In terms of assembly, forms a heterotetramer with UvrA during the search for lesions. Interacts with UvrC in an incision complex.

Its subcellular location is the cytoplasm. Its function is as follows. The UvrABC repair system catalyzes the recognition and processing of DNA lesions. A damage recognition complex composed of 2 UvrA and 2 UvrB subunits scans DNA for abnormalities. Upon binding of the UvrA(2)B(2) complex to a putative damaged site, the DNA wraps around one UvrB monomer. DNA wrap is dependent on ATP binding by UvrB and probably causes local melting of the DNA helix, facilitating insertion of UvrB beta-hairpin between the DNA strands. Then UvrB probes one DNA strand for the presence of a lesion. If a lesion is found the UvrA subunits dissociate and the UvrB-DNA preincision complex is formed. This complex is subsequently bound by UvrC and the second UvrB is released. If no lesion is found, the DNA wraps around the other UvrB subunit that will check the other stand for damage. The protein is UvrABC system protein B of Listeria innocua serovar 6a (strain ATCC BAA-680 / CLIP 11262).